Here is a 486-residue protein sequence, read N- to C-terminus: UDP-N-acetylmuramate--L-alanine ligase (486 aa).

ATP is bound at residue 126 to 132; that stretch reads GTHGKTT.

The protein belongs to the MurCDEF family.

The protein localises to the cytoplasm. The catalysed reaction is UDP-N-acetyl-alpha-D-muramate + L-alanine + ATP = UDP-N-acetyl-alpha-D-muramoyl-L-alanine + ADP + phosphate + H(+). It participates in cell wall biogenesis; peptidoglycan biosynthesis. Cell wall formation. The polypeptide is UDP-N-acetylmuramate--L-alanine ligase (Pectobacterium atrosepticum (strain SCRI 1043 / ATCC BAA-672) (Erwinia carotovora subsp. atroseptica)).